We begin with the raw amino-acid sequence, 245 residues long: Uridylate kinase (245 aa).

12–15 (KLSG) lines the ATP pocket. The segment at 20–25 (GEKGVG) is involved in allosteric activation by GTP. A UMP-binding site is contributed by glycine 54. 2 residues coordinate ATP: glycine 55 and arginine 59. UMP is bound by residues aspartate 74 and 135 to 142 (IGSPYFST). ATP contacts are provided by asparagine 163, tyrosine 169, and aspartate 172.

It belongs to the UMP kinase family. Homohexamer.

The protein localises to the cytoplasm. It carries out the reaction UMP + ATP = UDP + ADP. The protein operates within pyrimidine metabolism; CTP biosynthesis via de novo pathway; UDP from UMP (UMPK route): step 1/1. With respect to regulation, allosterically activated by GTP. Inhibited by UTP. Functionally, catalyzes the reversible phosphorylation of UMP to UDP. In Streptococcus thermophilus (strain ATCC BAA-491 / LMD-9), this protein is Uridylate kinase.